A 531-amino-acid polypeptide reads, in one-letter code: T-complex protein 1 subunit zeta (531 aa).

Alanine 2 is subject to N-acetylalanine. An N6-acetyllysine modification is found at lysine 5. Position 39 (glycine 39) interacts with ADP. Glycine 39 is an ATP binding site. Aspartate 90 provides a ligand contact to Mg(2+). 6 residues coordinate ADP: glycine 91, threonine 92, threonine 93, serine 94, threonine 158, and lysine 159. 3 residues coordinate ATP: glycine 91, threonine 92, and threonine 93. At lysine 199 the chain carries N6-acetyllysine. Serine 205 bears the Phosphoserine mark. Residue lysine 251 forms a Glycyl lysine isopeptide (Lys-Gly) (interchain with G-Cter in SUMO2) linkage. N6-acetyllysine is present on residues lysine 287, lysine 365, lysine 377, and lysine 388. Alanine 411 contacts ADP. The ATP site is built by alanine 411, glycine 412, aspartate 496, and lysine 501. Aspartate 496 provides a ligand contact to ADP.

This sequence belongs to the TCP-1 chaperonin family. As to quaternary structure, component of the chaperonin-containing T-complex (TRiC), a hexadecamer composed of two identical back-to-back stacked rings enclosing a protein folding chamber. Each ring is made up of eight different subunits: TCP1/CCT1, CCT2, CCT3, CCT4, CCT5, CCT6A/CCT6, CCT7, CCT8. Interacts with PACRG.

It localises to the cytoplasm. It catalyses the reaction ATP + H2O = ADP + phosphate + H(+). Functionally, component of the chaperonin-containing T-complex (TRiC), a molecular chaperone complex that assists the folding of actin, tubulin and other proteins upon ATP hydrolysis. The TRiC complex mediates the folding of WRAP53/TCAB1, thereby regulating telomere maintenance. This is T-complex protein 1 subunit zeta (CCT6) from Oryctolagus cuniculus (Rabbit).